A 278-amino-acid chain; its full sequence is Poly(3-hydroxyoctanoate) depolymerase (278 aa).

The N-terminal stretch at 1 to 33 is a signal peptide; that stretch reads MPLRTLLCGLLLAVCLGQHALAASRCSERPRTL.

The protein localises to the secreted. It catalyses the reaction Hydrolyzes the polyester poly{oxycarbonyl[(R)-2-pentylethylene]} to oligomers.. In terms of biological role, hydrolysis of poly(3-hydroxyoctanoic acid). In Pseudomonas fluorescens, this protein is Poly(3-hydroxyoctanoate) depolymerase (phaZ).